Reading from the N-terminus, the 198-residue chain is ATP-dependent Clp protease proteolytic subunit (198 aa).

Ser-98 (nucleophile) is an active-site residue. The active site involves His-123.

Belongs to the peptidase S14 family. In terms of assembly, fourteen ClpP subunits assemble into 2 heptameric rings which stack back to back to give a disk-like structure with a central cavity, resembling the structure of eukaryotic proteasomes.

The protein resides in the cytoplasm. It carries out the reaction Hydrolysis of proteins to small peptides in the presence of ATP and magnesium. alpha-casein is the usual test substrate. In the absence of ATP, only oligopeptides shorter than five residues are hydrolyzed (such as succinyl-Leu-Tyr-|-NHMec, and Leu-Tyr-Leu-|-Tyr-Trp, in which cleavage of the -Tyr-|-Leu- and -Tyr-|-Trp bonds also occurs).. Cleaves peptides in various proteins in a process that requires ATP hydrolysis. Has a chymotrypsin-like activity. Plays a major role in the degradation of misfolded proteins. The polypeptide is ATP-dependent Clp protease proteolytic subunit (Listeria innocua serovar 6a (strain ATCC BAA-680 / CLIP 11262)).